A 955-amino-acid chain; its full sequence is Isoleucine--tRNA ligase (955 aa).

The 'HIGH' region signature appears at 58–68; that stretch reads IYANGDIHIGH. L-isoleucyl-5'-AMP is bound at residue glutamate 552. Residues 593-597 carry the 'KMSKS' region motif; that stretch reads KMSKS. Position 596 (lysine 596) interacts with ATP. Residues cysteine 918, cysteine 921, cysteine 938, and cysteine 941 each coordinate Zn(2+).

Belongs to the class-I aminoacyl-tRNA synthetase family. IleS type 1 subfamily. Monomer. Requires Zn(2+) as cofactor.

It localises to the cytoplasm. It carries out the reaction tRNA(Ile) + L-isoleucine + ATP = L-isoleucyl-tRNA(Ile) + AMP + diphosphate. Catalyzes the attachment of isoleucine to tRNA(Ile). As IleRS can inadvertently accommodate and process structurally similar amino acids such as valine, to avoid such errors it has two additional distinct tRNA(Ile)-dependent editing activities. One activity is designated as 'pretransfer' editing and involves the hydrolysis of activated Val-AMP. The other activity is designated 'posttransfer' editing and involves deacylation of mischarged Val-tRNA(Ile). This is Isoleucine--tRNA ligase from Vesicomyosocius okutanii subsp. Calyptogena okutanii (strain HA).